A 101-amino-acid polypeptide reads, in one-letter code: Small ribosomal subunit protein uS14 (101 aa).

This sequence belongs to the universal ribosomal protein uS14 family. In terms of assembly, part of the 30S ribosomal subunit. Contacts proteins S3 and S10.

Functionally, binds 16S rRNA, required for the assembly of 30S particles and may also be responsible for determining the conformation of the 16S rRNA at the A site. The polypeptide is Small ribosomal subunit protein uS14 (Chelativorans sp. (strain BNC1)).